A 315-amino-acid polypeptide reads, in one-letter code: MSESLRIIFAGTPDFAARHLDALLSSGHNVVSVFTQPDRPAGRGKKLMPSPVKVLAEEKGLPVFQPVSLRPQENQQLVADLQADVMVVVAYGLILPKAVLEMPRLGCINVHGSLLPRWRGAAPIQRSLWAGDAETGVTIMQMDVGLDTGDMLYKLSCPITAEDTSGTLYDKLAELGPQGLITTLKQLADGTAKPEVQDETLVTYAEKLSKEEARIDWSLSAAQLERCIRAFNPWPMSWLEIEGQPVKVWKASVIDTATNAAPGTILEANKQGIQVATGDGILNLLSLQPAGKKAMSAQDLLNSRREWFVPGNRLV.

113–116 contacts (6S)-5,6,7,8-tetrahydrofolate; that stretch reads SLLP.

Belongs to the Fmt family.

The enzyme catalyses L-methionyl-tRNA(fMet) + (6R)-10-formyltetrahydrofolate = N-formyl-L-methionyl-tRNA(fMet) + (6S)-5,6,7,8-tetrahydrofolate + H(+). Attaches a formyl group to the free amino group of methionyl-tRNA(fMet). The formyl group appears to play a dual role in the initiator identity of N-formylmethionyl-tRNA by promoting its recognition by IF2 and preventing the misappropriation of this tRNA by the elongation apparatus. The polypeptide is Methionyl-tRNA formyltransferase (Escherichia coli (strain SE11)).